The primary structure comprises 453 residues: UDP-N-acetylmuramoylalanine--D-glutamate ligase (453 aa).

117–123 serves as a coordination point for ATP; sequence GTNGKTT.

Belongs to the MurCDEF family.

Its subcellular location is the cytoplasm. It catalyses the reaction UDP-N-acetyl-alpha-D-muramoyl-L-alanine + D-glutamate + ATP = UDP-N-acetyl-alpha-D-muramoyl-L-alanyl-D-glutamate + ADP + phosphate + H(+). It functions in the pathway cell wall biogenesis; peptidoglycan biosynthesis. Cell wall formation. Catalyzes the addition of glutamate to the nucleotide precursor UDP-N-acetylmuramoyl-L-alanine (UMA). This Caldicellulosiruptor saccharolyticus (strain ATCC 43494 / DSM 8903 / Tp8T 6331) protein is UDP-N-acetylmuramoylalanine--D-glutamate ligase.